The chain runs to 63 residues: MTIFDSIALISKSSKSGLTSGNTTSKLNGITVGGNNVSSVNCGGCGGYTNNEPSLYGGNCGCN.

In Dictyostelium discoideum (Social amoeba), this protein is Protein sigN172.